Consider the following 141-residue polypeptide: Large ribosomal subunit protein uL11 (141 aa).

This sequence belongs to the universal ribosomal protein uL11 family. Part of the ribosomal stalk of the 50S ribosomal subunit. Interacts with L10 and the large rRNA to form the base of the stalk. L10 forms an elongated spine to which L12 dimers bind in a sequential fashion forming a multimeric L10(L12)X complex. In terms of processing, one or more lysine residues are methylated.

Its function is as follows. Forms part of the ribosomal stalk which helps the ribosome interact with GTP-bound translation factors. This chain is Large ribosomal subunit protein uL11, found in Exiguobacterium sibiricum (strain DSM 17290 / CCUG 55495 / CIP 109462 / JCM 13490 / 255-15).